Consider the following 548-residue polypeptide: ATP synthase subunit alpha, mitochondrial (548 aa).

209-216 (GDRQTGKT) serves as a coordination point for ATP.

The protein belongs to the ATPase alpha/beta chains family. In terms of assembly, F-type ATPases have 2 components, CF(1) - the catalytic core - and CF(0) - the membrane proton channel. CF(1) has five subunits: alpha(3), beta(3), gamma(1), delta(1), epsilon(1). CF(0) has three main subunits: a, b and c.

It localises to the mitochondrion. The protein localises to the mitochondrion inner membrane. Its function is as follows. Mitochondrial membrane ATP synthase (F(1)F(0) ATP synthase or Complex V) produces ATP from ADP in the presence of a proton gradient across the membrane which is generated by electron transport complexes of the respiratory chain. F-type ATPases consist of two structural domains, F(1) - containing the extramembraneous catalytic core, and F(0) - containing the membrane proton channel, linked together by a central stalk and a peripheral stalk. During catalysis, ATP synthesis in the catalytic domain of F(1) is coupled via a rotary mechanism of the central stalk subunits to proton translocation. Subunits alpha and beta form the catalytic core in F(1). Rotation of the central stalk against the surrounding alpha(3)beta(3) subunits leads to hydrolysis of ATP in three separate catalytic sites on the beta subunits. Subunit alpha does not bear the catalytic high-affinity ATP-binding sites. This Kluyveromyces lactis (strain ATCC 8585 / CBS 2359 / DSM 70799 / NBRC 1267 / NRRL Y-1140 / WM37) (Yeast) protein is ATP synthase subunit alpha, mitochondrial (ATP1).